The primary structure comprises 274 residues: Diaminopimelate epimerase (274 aa).

Residues Asn-11, Gln-44, and Asn-64 each coordinate substrate. Residue Cys-73 is the Proton donor of the active site. Residues 74–75 (GN), Asn-157, Asn-190, and 208–209 (ER) contribute to the substrate site. The Proton acceptor role is filled by Cys-217. Residue 218 to 219 (GS) participates in substrate binding.

This sequence belongs to the diaminopimelate epimerase family. As to quaternary structure, homodimer.

Its subcellular location is the cytoplasm. The catalysed reaction is (2S,6S)-2,6-diaminopimelate = meso-2,6-diaminopimelate. It participates in amino-acid biosynthesis; L-lysine biosynthesis via DAP pathway; DL-2,6-diaminopimelate from LL-2,6-diaminopimelate: step 1/1. Functionally, catalyzes the stereoinversion of LL-2,6-diaminopimelate (L,L-DAP) to meso-diaminopimelate (meso-DAP), a precursor of L-lysine and an essential component of the bacterial peptidoglycan. The protein is Diaminopimelate epimerase of Shigella boydii serotype 18 (strain CDC 3083-94 / BS512).